We begin with the raw amino-acid sequence, 468 residues long: Probable Xaa-Pro aminopeptidase PEPP (468 aa).

The Mn(2+) site is built by Asp264, Asp275, Glu398, and Glu438.

It belongs to the peptidase M24B family. Mn(2+) serves as cofactor.

The catalysed reaction is Release of any N-terminal amino acid, including proline, that is linked to proline, even from a dipeptide or tripeptide.. In terms of biological role, catalyzes the removal of a penultimate prolyl residue from the N-termini of peptides. This Ajellomyces dermatitidis (strain ER-3 / ATCC MYA-2586) (Blastomyces dermatitidis) protein is Probable Xaa-Pro aminopeptidase PEPP (PEPP).